The following is a 202-amino-acid chain: Small ribosomal subunit protein uS4c (202 aa).

The region spanning 90 to 153 (MRLDNIIFRL…KSEAIISKNI (64 aa)) is the S4 RNA-binding domain.

This sequence belongs to the universal ribosomal protein uS4 family. As to quaternary structure, part of the 30S ribosomal subunit. Contacts protein S5. The interaction surface between S4 and S5 is involved in control of translational fidelity.

Its subcellular location is the plastid. It is found in the chloroplast. Its function is as follows. One of the primary rRNA binding proteins, it binds directly to 16S rRNA where it nucleates assembly of the body of the 30S subunit. In terms of biological role, with S5 and S12 plays an important role in translational accuracy. The polypeptide is Small ribosomal subunit protein uS4c (rps4) (Leucodon sciuroides (Moss)).